A 210-amino-acid chain; its full sequence is MSDMDDEITRIFKVRRTVLQMLRDRGYTIEESDLNLKREEFVQRFCKTMNKVNKEALFVSANKGPNPADKIYVFYPEGPKVGVPVIKKEVAIKMRDDKVHRGIVVVPMAITAPARMAVSELNKMLTIEVFEEAELVTNITEHKLVNKYYVLDDQAKKKLLNTYTVQDTQLPRILVTDPLARYYGLKRGQVVKIRRSDATSLDYYTYRFAV.

The protein belongs to the archaeal Rpo5/eukaryotic RPB5 RNA polymerase subunit family.

Its subcellular location is the nucleus. The polypeptide is DNA-directed RNA polymerase subunit 5-like protein 1 (NRPB5L1) (Arabidopsis thaliana (Mouse-ear cress)).